Reading from the N-terminus, the 318-residue chain is tRNA dimethylallyltransferase (318 aa).

13 to 20 contacts ATP; it reads GPTAVGKT. Residue 15–20 coordinates substrate; it reads TAVGKT. Residues 38 to 41 are interaction with substrate tRNA; the sequence is DSMQ.

This sequence belongs to the IPP transferase family. In terms of assembly, monomer. It depends on Mg(2+) as a cofactor.

The catalysed reaction is adenosine(37) in tRNA + dimethylallyl diphosphate = N(6)-dimethylallyladenosine(37) in tRNA + diphosphate. Its function is as follows. Catalyzes the transfer of a dimethylallyl group onto the adenine at position 37 in tRNAs that read codons beginning with uridine, leading to the formation of N6-(dimethylallyl)adenosine (i(6)A). The protein is tRNA dimethylallyltransferase of Bacillus pumilus (strain SAFR-032).